The primary structure comprises 405 residues: Aurora kinase A (405 aa).

Composition is skewed to polar residues over residues 32–82 and 91–110; these read VPSQ…QLQA and RSLNNTQKSEQPSSSAPGNN. The segment at 32–127 is disordered; it reads VPSQNPLSAN…KQKNEESKKR (96 aa). Phosphoserine is present on residues Ser42 and Ser52. The segment covering 111–127 has biased composition (basic and acidic residues); it reads SEKELATKQKNEESKKR. The Protein kinase domain maps to 134–384; that stretch reads FEIGRPLGKG…LKDVLEHPWI (251 aa). ATP-binding positions include Lys144, Lys163, and 212 to 214; that span reads EYA. The active-site Proton acceptor is the Asp257. A Glycyl lysine isopeptide (Lys-Gly) (interchain with G-Cter in SUMO2) cross-link involves residue Lys259. ATP-binding positions include 261-262 and Asp275; that span reads EN. An activation segment region spans residues 281–294; it reads HAPSSRRTTLCGTL. Residues Thr288 and Thr289 each carry the phosphothreonine modification. A Phosphoserine modification is found at Ser343. The disordered stretch occupies residues 385–405; sequence MANSSKPSSSQKSKDSTSKQS. Positions 396-405 are enriched in basic and acidic residues; that stretch reads KSKDSTSKQS.

The protein belongs to the protein kinase superfamily. Ser/Thr protein kinase family. Aurora subfamily. As to quaternary structure, part of a complex composed of NEDD9, AURKA and CTTN; within the complex NEDD9 acts as a scaffold protein and is required for complex formation. Identified in a complex with AUNIP and NIN. Interacts with FBXL7. Interacts with CPEB1, JTB, TACC1, TPX2, PPP2CA, as well as with the protein phosphatase type 1 (PP1) isoforms PPP1CA, PPP1CB and PPP1CC. Also interacts with its substrates ARHGEF2, BORA, KIF2A, PARD3, and p53/TP53. Interaction with BORA promotes phosphorylation of PLK1. Interacts with CIMAP3. Interacts with GADD45A, competing with its oligomerization. Interacts (via C-terminus) with AUNIP (via C-terminus). Interacts with FRY; this interaction facilitates AURKA-mediated PLK1 phosphorylation. Interacts with SIRT2. Interacts with MYCN; interaction is phospho-independent and triggers AURKA activation; AURKA competes with FBXW7 for binding to unphosphorylated MYCN but not for binding to phosphorylated MYCN. Interacts with HNRNPU. Interacts with AAAS. Interacts with KLHL18 and CUL3. Interacts with FOXP1. Interacts with HDAC6; AURKA-mediated phosphorylation of HDAC6 promotes deacetylation of alpha-tubulin. In terms of processing, activated by phosphorylation at Thr-289; this brings about a change in the conformation of the activation segment. Phosphorylation at Thr-289 varies during the cell cycle and is highest during M phase. Autophosphorylated at Thr-289 upon TPX2 binding. Thr-289 can be phosphorylated by several kinases, including PAK and PKA. Protein phosphatase type 1 (PP1) binds AURKA and inhibits its activity by dephosphorylating Thr-289 during mitosis. Phosphorylation at Ser-343 decreases the kinase activity. PPP2CA controls degradation by dephosphorylating Ser-52 at the end of mitosis. Post-translationally, ubiquitinated by the E3 ubiquitin-protein ligase complex SCF(FBXL7) during mitosis, leading to its degradation by the proteasome. Ubiquitinated by CHFR, leading to its degradation by the proteasome. Ubiquitinated by the anaphase-promoting complex (APC), leading to its degradation by the proteasome. Ubiquitinated by the CUL3-KLHL18 ligase leading to its activation at the centrosome which is required for initiating mitotic entry. Ubiquitination mediated by CUL3-KLHL18 ligase does not lead to its degradation by the proteasome.

It localises to the cytoplasm. The protein resides in the cytoskeleton. The protein localises to the microtubule organizing center. Its subcellular location is the centrosome. It is found in the spindle pole. It localises to the centriole. The protein resides in the cell projection. The protein localises to the neuron projection. Its subcellular location is the cilium. It is found in the cilium basal body. It localises to the basolateral cell membrane. It carries out the reaction L-seryl-[protein] + ATP = O-phospho-L-seryl-[protein] + ADP + H(+). It catalyses the reaction L-threonyl-[protein] + ATP = O-phospho-L-threonyl-[protein] + ADP + H(+). With respect to regulation, activation of CDK1, appears to be an upstream event of AURKA activation. Phosphatase inhibitor-2 (PPP1R2) and TPX2 act also as activators. Inactivated by the G2 checkpoint. Inhibited by GADD45A and p53/TP53, and through dephosphorylation by protein phosphatase type 1 (PP1). MLN8054 is also a potent and selective inhibitor. Activated during the early phase of cilia disassembly in the presence of CIMAP3. Inhibited by the small molecule inhibitor VX-680. Functionally, mitotic serine/threonine kinase that contributes to the regulation of cell cycle progression. Associates with the centrosome and the spindle microtubules during mitosis and plays a critical role in various mitotic events including the establishment of mitotic spindle, centrosome duplication, centrosome separation as well as maturation, chromosomal alignment, spindle assembly checkpoint, and cytokinesis. Required for normal spindle positioning during mitosis and for the localization of NUMA1 and DCTN1 to the cell cortex during metaphase. Required for initial activation of CDK1 at centrosomes. Phosphorylates numerous target proteins, including ARHGEF2, BORA, BRCA1, CDC25B, DLGP5, HDAC6, KIF2A, LATS2, NDEL1, PARD3, PPP1R2, PLK1, RASSF1, TACC3, p53/TP53 and TPX2. Phosphorylates MCRS1 which is required for MCRS1-mediated kinetochore fiber assembly and mitotic progression. Regulates KIF2A tubulin depolymerase activity. Important for microtubule formation and/or stabilization. Required for normal axon formation. Plays a role in microtubule remodeling during neurite extension. Also acts as a key regulatory component of the p53/TP53 pathway, and particularly the checkpoint-response pathways critical for oncogenic transformation of cells, by phosphorylating and destabilizing p53/TP53. Phosphorylates its own inhibitors, the protein phosphatase type 1 (PP1) isoforms, to inhibit their activity. Inhibits cilia outgrowth. Required for cilia disassembly via phosphorylation of HDAC6 and subsequent deacetylation of alpha-tubulin. Regulates protein levels of the anti-apoptosis protein BIRC5 by suppressing the expression of the SCF(FBXL7) E3 ubiquitin-protein ligase substrate adapter FBXL7 through the phosphorylation of the transcription factor FOXP1. The polypeptide is Aurora kinase A (Canis lupus familiaris (Dog)).